The following is a 105-amino-acid chain: Small ribosomal subunit protein uS10 (105 aa).

It belongs to the universal ribosomal protein uS10 family. Part of the 30S ribosomal subunit.

In terms of biological role, involved in the binding of tRNA to the ribosomes. The sequence is that of Small ribosomal subunit protein uS10 from Acaryochloris marina (strain MBIC 11017).